Reading from the N-terminus, the 173-residue chain is NADH-quinone oxidoreductase subunit I 1 (173 aa).

4Fe-4S ferredoxin-type domains follow at residues 41–73 (IVLT…LAKA) and 83–112 (EHFR…LTPD). [4Fe-4S] cluster is bound by residues Cys-53, Cys-56, Cys-59, Cys-63, Cys-92, Cys-95, Cys-98, and Cys-102.

It belongs to the complex I 23 kDa subunit family. As to quaternary structure, NDH-1 is composed of 14 different subunits. Subunits NuoA, H, J, K, L, M, N constitute the membrane sector of the complex. It depends on [4Fe-4S] cluster as a cofactor.

The protein localises to the cell inner membrane. It catalyses the reaction a quinone + NADH + 5 H(+)(in) = a quinol + NAD(+) + 4 H(+)(out). In terms of biological role, NDH-1 shuttles electrons from NADH, via FMN and iron-sulfur (Fe-S) centers, to quinones in the respiratory chain. The immediate electron acceptor for the enzyme in this species is believed to be ubiquinone. Couples the redox reaction to proton translocation (for every two electrons transferred, four hydrogen ions are translocated across the cytoplasmic membrane), and thus conserves the redox energy in a proton gradient. In Rhodopseudomonas palustris (strain BisA53), this protein is NADH-quinone oxidoreductase subunit I 1.